Here is a 101-residue protein sequence, read N- to C-terminus: Urease subunit beta (101 aa).

The protein belongs to the urease beta subunit family. In terms of assembly, heterotrimer of UreA (gamma), UreB (beta) and UreC (alpha) subunits. Three heterotrimers associate to form the active enzyme.

It localises to the cytoplasm. It catalyses the reaction urea + 2 H2O + H(+) = hydrogencarbonate + 2 NH4(+). It participates in nitrogen metabolism; urea degradation; CO(2) and NH(3) from urea (urease route): step 1/1. The protein is Urease subunit beta of Cupriavidus necator (strain ATCC 17699 / DSM 428 / KCTC 22496 / NCIMB 10442 / H16 / Stanier 337) (Ralstonia eutropha).